The chain runs to 185 residues: Adenine phosphoribosyltransferase (185 aa).

It belongs to the purine/pyrimidine phosphoribosyltransferase family.

It is found in the cytoplasm. It carries out the reaction AMP + diphosphate = 5-phospho-alpha-D-ribose 1-diphosphate + adenine. Its pathway is purine metabolism; AMP biosynthesis via salvage pathway; AMP from adenine: step 1/1. In terms of biological role, catalyzes a salvage reaction resulting in the formation of AMP, that is energically less costly than de novo synthesis. The protein is Adenine phosphoribosyltransferase (aprt-1) of Caenorhabditis elegans.